We begin with the raw amino-acid sequence, 199 residues long: Ribonuclease P protein subunit p25 (199 aa).

A compositionally biased stretch (basic and acidic residues) spans 1–11 (MENFRKVRSEE). Disordered stretches follow at residues 1–31 (MENF…FADL) and 146–199 (PRQL…DRTA). At serine 172 the chain carries Phosphoserine. A compositionally biased stretch (acidic residues) spans 190 to 199 (PEAENEDRTA).

It belongs to the histone-like Alba family. In terms of assembly, component of nuclear RNase P and RNase MRP ribonucleoproteins. RNase P consists of a catalytic RNA moiety and 10 different protein chains; POP1, POP4, POP5, POP7, RPP14, RPP21, RPP25, RPP30, RPP38 and RPP40. Within the RNase P complex, POP1, POP7 and RPP25 form the 'finger' subcomplex, POP5, RPP14, RPP40 and homodimeric RPP30 form the 'palm' subcomplex, and RPP21, POP4 and RPP38 form the 'wrist' subcomplex. All subunits of the RNase P complex interact with the catalytic RNA. Several subunits of RNase P are also part of the RNase MRP complex. RNase MRP consists of a catalytic RNA moiety and about 8 protein subunits; POP1, POP7, RPP25, RPP30, RPP38, RPP40 and possibly also POP4 and POP5. POP7 forms a heterodimer with RPP25 that binds to the P3 stem loop of the catalytic RNA.

The protein resides in the nucleus. It is found in the nucleolus. Its function is as follows. Component of ribonuclease P, a ribonucleoprotein complex that generates mature tRNA molecules by cleaving their 5'-ends. Also a component of the MRP ribonuclease complex, which cleaves pre-rRNA sequences. The chain is Ribonuclease P protein subunit p25 (Rpp25) from Mus musculus (Mouse).